The following is a 1071-amino-acid chain: ATP-dependent helicase/deoxyribonuclease subunit B (1071 aa).

It belongs to the helicase family. AddB/RexB type 2 subfamily. As to quaternary structure, heterodimer of AddA and RexB. Requires Mg(2+) as cofactor.

Functionally, the heterodimer acts as both an ATP-dependent DNA helicase and an ATP-dependent, dual-direction single-stranded exonuclease. Recognizes the chi site generating a DNA molecule suitable for the initiation of homologous recombination. This subunit has 5' -&gt; 3' nuclease activity but not helicase activity. This chain is ATP-dependent helicase/deoxyribonuclease subunit B, found in Streptococcus pyogenes serotype M28 (strain MGAS6180).